The following is a 202-amino-acid chain: uncharacterized protein (202 aa).

This is an uncharacterized protein from Escherichia coli (Bacteriophage T4).